The following is a 251-amino-acid chain: 5-oxoprolinase subunit A (251 aa).

Belongs to the LamB/PxpA family. In terms of assembly, forms a complex composed of PxpA, PxpB and PxpC.

It carries out the reaction 5-oxo-L-proline + ATP + 2 H2O = L-glutamate + ADP + phosphate + H(+). Functionally, catalyzes the cleavage of 5-oxoproline to form L-glutamate coupled to the hydrolysis of ATP to ADP and inorganic phosphate. The protein is 5-oxoprolinase subunit A of Tolumonas auensis (strain DSM 9187 / NBRC 110442 / TA 4).